Reading from the N-terminus, the 1350-residue chain is 1-phosphatidylinositol 4,5-bisphosphate phosphodiesterase gamma plc-3 (1350 aa).

The tract at residues 1–40 is disordered; the sequence is MQHGSLGPSSSSRKTTVTSTAGSVHLHHRSSNGFSTASRA. The span at 9 to 20 shows a compositional bias: low complexity; the sequence is SSSSRKTTVTST. The segment covering 31-40 has biased composition (polar residues); that stretch reads SNGFSTASRA. In terms of domain architecture, PI-PLC X-box spans 352–503; sequence HDMSRPLSHY…LKKKIIVKHK (152 aa). Active-site residues include His367 and His419. The segment at 570–594 is disordered; that stretch reads NPNDDTVSVSGDEEREEETPSGFGV. 2 SH2 domains span residues 605–704 and 715–804; these read WFHG…TIPC and WFSA…RFPV. The SH3 domain occupies 832–890; sequence DKEVQARALRPYRGTADDELSFPANVIITVLRKEEGLWRGRYGSLTGWFPSAHVQEILP. The 106-residue stretch at 855–960 folds into the PH domain; it reads ANVIITVLRK…WQNNLFELTR (106 aa). The region spanning 982–1092 is the PI-PLC Y-box domain; sequence LSNLVVYCQA…CGYLLKPDYM (111 aa). The C2 domain maps to 1099-1220; sequence PTNTEKFATA…CGFRSVPLKN (122 aa). The segment at 1270 to 1350 is disordered; sequence GDSIPREMAP…KFSFGKSSKS (81 aa). Over residues 1283-1329 the composition is skewed to polar residues; it reads TSATDRSLDSPTNSESRATLLSGQRGSQDSMDSAAETSSIASGTISS. A compositionally biased stretch (low complexity) spans 1340–1350; it reads KKFSFGKSSKS.

Ca(2+) is required as a cofactor. As to expression, expressed in intestine, isthmus of the pharynx, proximal gonad sheath cells, spermatheca and uterine sheath cells. In males, expressed in the valve cell, the vas deferens and retractor and ventral protactor muscles.

It catalyses the reaction a 1,2-diacyl-sn-glycero-3-phospho-(1D-myo-inositol-4,5-bisphosphate) + H2O = 1D-myo-inositol 1,4,5-trisphosphate + a 1,2-diacyl-sn-glycerol + H(+). Mediates the production of the second messenger molecules diacylglycerol (DAG) and inositol 1,4,5-trisphosphate (IP3) which plays an important role in the regulation of intracellular signaling cascades. Regulates basal and ovulatory sheath cell contractions by controlling Ca(2+) oscillations via IP3-mediated activation of IP3 receptor itr-1. In intestinal epithelial cells, regulates Ca(2+) oscillations which control posterior body wall muscle contractions required for defecation by IP3-mediated activation of itr-1 and probably by activating TRPM channels gon-2 and gtl-1 by reducing PIP2 levels. By activating tpa-1 via DAG production, required for the expression of antimicrobial peptide nlp-29 in the epidermis in response to fungal infection or physical injury. By triggering Ca(2+) transient via IP3-mediated activation of IPR3 receptor itr-1 in ASH sensory neurons, involved in avoidance behavior in response to nose touch. Probably by regulating neuronal transmission in ALA neurons, mediates the decrease in pharyngeal pumping and locomotion during the quiescent state that precedes each larval molt, downstream of lin-3 and receptor let-23 and upstream of tpa-1 but not itr-1. During embryogenesis, may play an role in epidermal morphogenesis together with plc-1. Probably downstream of receptor daf-2, regulates male-sex muscle excitability in the absence of food. The protein is 1-phosphatidylinositol 4,5-bisphosphate phosphodiesterase gamma plc-3 of Caenorhabditis elegans.